The following is a 265-amino-acid chain: MQIRQSIKLKKPLIHYITNPISINDCANIILAAGAKPIMAEHPLEVSEITSVSKSLGVNLGNITDNKMKSMLISGKTAYENKIPQVIDLVGVGCSKLRLDYAKKFISECHPNVIKGNMSEIKAIYGIKSSAKGIDVGACDIITKQNFDENIEMIKRLSMETGSVVAATGVVDIISNGTYTYIISNGCEMLSMITGTGCMLTGLIASYISSENILDGTVLAVALMGICGELSQHAKGTGSFRNELTDNMFSISDDIIIKKIRINSY.

Met39 contributes to the substrate binding site. Residues Lys115 and Thr168 each contribute to the ATP site. Gly195 provides a ligand contact to substrate.

The protein belongs to the Thz kinase family. Requires Mg(2+) as cofactor.

The enzyme catalyses 5-(2-hydroxyethyl)-4-methylthiazole + ATP = 4-methyl-5-(2-phosphooxyethyl)-thiazole + ADP + H(+). It functions in the pathway cofactor biosynthesis; thiamine diphosphate biosynthesis; 4-methyl-5-(2-phosphoethyl)-thiazole from 5-(2-hydroxyethyl)-4-methylthiazole: step 1/1. Functionally, catalyzes the phosphorylation of the hydroxyl group of 4-methyl-5-beta-hydroxyethylthiazole (THZ). The sequence is that of Hydroxyethylthiazole kinase 2 from Clostridium botulinum (strain ATCC 19397 / Type A).